A 1414-amino-acid polypeptide reads, in one-letter code: Alpha-(1-&gt;3)-arabinofuranosyltransferase (1414 aa).

The next 9 helical transmembrane spans lie at 57 to 77 (YLFP…PGWV), 81 to 101 (LWWA…AEAL), 128 to 148 (AISS…PVIL), 167 to 187 (VALM…AAVI), 203 to 223 (AWWL…LLML), 273 to 293 (STTA…GLAL), 302 to 322 (LITM…GGLG), 352 to 372 (LPLA…GSAP), and 389 to 409 (VAVA…AWTA). Positions 687–845 (YPSDGADLVY…QYDASGFAHP (159 aa)) constitute an F5/8 type C domain. 4 helical membrane-spanning segments follow: residues 1253–1273 (VGLI…LIPV), 1297–1317 (ALVA…GAAM), 1333–1353 (VWDN…GSVL), and 1364–1384 (YVGH…FLAA). Residues 1393 to 1414 (PEPSEDGRSAKPEHTGASAHAG) form a disordered region. The span at 1394 to 1406 (EPSEDGRSAKPEH) shows a compositional bias: basic and acidic residues.

It localises to the membrane. The catalysed reaction is Adds an alpha-D-arabinofuranosyl group from trans,octacis-decaprenylphospho-beta-D-arabinofuranose at the 3-O-position of an alpha-(1-&gt;5)-arabinofuranan chain attached to a beta-(1-&gt;5)-galactofuranan chain.. It participates in cell wall biogenesis; cell wall polysaccharide biosynthesis. In terms of biological role, involved in the biosynthesis of the arabinogalactan (AG) region of the mycolylarabinogalactan-peptidoglycan (mAGP) complex, an essential component of the mycobacterial cell wall. Catalyzes the addition of an arabinofuranosyl (Araf) residue from the sugar donor decaprenyl-phospho-arabinose (DPA) on the C-3 of an alpha-(1-&gt;5)-linked Araf from the arabinan backbone of AG. This is Alpha-(1-&gt;3)-arabinofuranosyltransferase (aftD) from Mycolicibacterium smegmatis (strain ATCC 700084 / mc(2)155) (Mycobacterium smegmatis).